Consider the following 121-residue polypeptide: Small ribosomal subunit protein uS13 (121 aa).

The tract at residues 96–121 is disordered; that stretch reads PVRGQNTKNNARTRKGKAVAIAGKKK. Positions 106–121 are enriched in basic residues; that stretch reads ARTRKGKAVAIAGKKK.

This sequence belongs to the universal ribosomal protein uS13 family. As to quaternary structure, part of the 30S ribosomal subunit. Forms a loose heterodimer with protein S19. Forms two bridges to the 50S subunit in the 70S ribosome.

Functionally, located at the top of the head of the 30S subunit, it contacts several helices of the 16S rRNA. In the 70S ribosome it contacts the 23S rRNA (bridge B1a) and protein L5 of the 50S subunit (bridge B1b), connecting the 2 subunits; these bridges are implicated in subunit movement. Contacts the tRNAs in the A and P-sites. This is Small ribosomal subunit protein uS13 from Streptococcus gordonii (strain Challis / ATCC 35105 / BCRC 15272 / CH1 / DL1 / V288).